A 205-amino-acid polypeptide reads, in one-letter code: Glycerol-3-phosphate acyltransferase (205 aa).

The Periplasmic portion of the chain corresponds to 1–3 (MSA). Residues 4–24 (IAPGMILFAYLCGSISSAILV) traverse the membrane as a helical segment. The Cytoplasmic segment spans residues 25-52 (CRLCGLPDPRTSGSGNPGATNVLRMGGK). A helical membrane pass occupies residues 53-73 (GAALAVLIFDVLKGMLPVWGA). Residues 74–80 (YELGVSP) lie on the Periplasmic side of the membrane. A helical membrane pass occupies residues 81–101 (FWLGLIAIAACLGHIWPIFFG). The Cytoplasmic portion of the chain corresponds to 102–111 (FKGGKGVATA). The helical transmembrane segment at 112 to 132 (FGAIAPIGWDLTGVMAGTWLL) threads the bilayer. Topologically, residues 133 to 137 (TVLLS) are periplasmic. A helical transmembrane segment spans residues 138 to 158 (GYSSLGAIVSALIAPFYVWWF). Topologically, residues 159–205 (KPQFTFPVSMLSCLILLRHHDNIQRLWRRQETKIWTKLKRKREKDPE) are cytoplasmic.

This sequence belongs to the PlsY family. In terms of assembly, probably interacts with PlsX.

The protein localises to the cell inner membrane. The enzyme catalyses sn-glycerol 3-phosphate + an acyl-CoA = a 1-acyl-sn-glycero-3-phosphate + CoA. It catalyses the reaction a fatty acyl-[ACP] + sn-glycerol 3-phosphate = a 1-acyl-sn-glycero-3-phosphate + holo-[ACP]. It participates in lipid metabolism; phospholipid metabolism. In terms of biological role, catalyzes the transfer of an acyl group from acyl-ACP to glycerol-3-phosphate (G3P) to form lysophosphatidic acid (LPA). This enzyme can also utilize acyl-CoA as fatty acyl donor, but not acyl-PO(4). This Escherichia fergusonii (strain ATCC 35469 / DSM 13698 / CCUG 18766 / IAM 14443 / JCM 21226 / LMG 7866 / NBRC 102419 / NCTC 12128 / CDC 0568-73) protein is Glycerol-3-phosphate acyltransferase.